The following is a 356-amino-acid chain: UDP-N-acetylglucosamine--N-acetylmuramyl-(pentapeptide) pyrophosphoryl-undecaprenol N-acetylglucosamine transferase (356 aa).

Residues 12–14, Asn-120, Arg-163, Ser-187, and Gln-286 contribute to the UDP-N-acetyl-alpha-D-glucosamine site; that span reads SGG.

It belongs to the glycosyltransferase 28 family. MurG subfamily.

Its subcellular location is the cell inner membrane. The enzyme catalyses di-trans,octa-cis-undecaprenyl diphospho-N-acetyl-alpha-D-muramoyl-L-alanyl-D-glutamyl-meso-2,6-diaminopimeloyl-D-alanyl-D-alanine + UDP-N-acetyl-alpha-D-glucosamine = di-trans,octa-cis-undecaprenyl diphospho-[N-acetyl-alpha-D-glucosaminyl-(1-&gt;4)]-N-acetyl-alpha-D-muramoyl-L-alanyl-D-glutamyl-meso-2,6-diaminopimeloyl-D-alanyl-D-alanine + UDP + H(+). The protein operates within cell wall biogenesis; peptidoglycan biosynthesis. In terms of biological role, cell wall formation. Catalyzes the transfer of a GlcNAc subunit on undecaprenyl-pyrophosphoryl-MurNAc-pentapeptide (lipid intermediate I) to form undecaprenyl-pyrophosphoryl-MurNAc-(pentapeptide)GlcNAc (lipid intermediate II). This is UDP-N-acetylglucosamine--N-acetylmuramyl-(pentapeptide) pyrophosphoryl-undecaprenol N-acetylglucosamine transferase from Pelagibacter ubique (strain HTCC1062).